Here is a 207-residue protein sequence, read N- to C-terminus: A-type ATP synthase subunit E (207 aa).

Belongs to the V-ATPase E subunit family. As to quaternary structure, has multiple subunits with at least A(3), B(3), C, D, E, F, H, I and proteolipid K(x).

The protein resides in the cell membrane. Functionally, component of the A-type ATP synthase that produces ATP from ADP in the presence of a proton gradient across the membrane. This is A-type ATP synthase subunit E from Hyperthermus butylicus (strain DSM 5456 / JCM 9403 / PLM1-5).